A 117-amino-acid polypeptide reads, in one-letter code: MVNIYDTANQLANDLRETQQFLALKEAMDAVKADEGSLALFKELDAAQMEIMEAQQTGKELTEEQQDHFKSLNERVSQNTTLQSMLLAEQAVYTLLNDVQKNIGQPLSEAYEDLRKA.

It belongs to the UPF0342 family.

The polypeptide is UPF0342 protein LBUL_1430 (Lactobacillus delbrueckii subsp. bulgaricus (strain ATCC BAA-365 / Lb-18)).